Consider the following 134-residue polypeptide: Small ribosomal subunit protein uS12 (134 aa).

A 3-methylthioaspartic acid modification is found at Asp89. A disordered region spans residues 109-134; sequence KRNVSRSKYGAKKGKAGAAPTTGKKK. The segment covering 111–123 has biased composition (basic residues); it reads NVSRSKYGAKKGK. The segment covering 124–134 has biased composition (low complexity); that stretch reads AGAAPTTGKKK.

This sequence belongs to the universal ribosomal protein uS12 family. As to quaternary structure, part of the 30S ribosomal subunit. Contacts proteins S8 and S17. May interact with IF1 in the 30S initiation complex.

Functionally, with S4 and S5 plays an important role in translational accuracy. Interacts with and stabilizes bases of the 16S rRNA that are involved in tRNA selection in the A site and with the mRNA backbone. Located at the interface of the 30S and 50S subunits, it traverses the body of the 30S subunit contacting proteins on the other side and probably holding the rRNA structure together. The combined cluster of proteins S8, S12 and S17 appears to hold together the shoulder and platform of the 30S subunit. The protein is Small ribosomal subunit protein uS12 of Wolinella succinogenes (strain ATCC 29543 / DSM 1740 / CCUG 13145 / JCM 31913 / LMG 7466 / NCTC 11488 / FDC 602W) (Vibrio succinogenes).